Here is a 134-residue protein sequence, read N- to C-terminus: D-ribose pyranase (134 aa).

Histidine 20 acts as the Proton donor in catalysis. Residues aspartate 28, histidine 99, and 123–125 (YSN) contribute to the substrate site.

Belongs to the RbsD / FucU family. RbsD subfamily. As to quaternary structure, homodecamer.

Its subcellular location is the cytoplasm. The catalysed reaction is beta-D-ribopyranose = beta-D-ribofuranose. It participates in carbohydrate metabolism; D-ribose degradation; D-ribose 5-phosphate from beta-D-ribopyranose: step 1/2. Its function is as follows. Catalyzes the interconversion of beta-pyran and beta-furan forms of D-ribose. This chain is D-ribose pyranase, found in Staphylococcus aureus (strain USA300).